The following is a 457-amino-acid chain: Peptidyl-prolyl cis-trans isomerase FKBP5 (457 aa).

Met-1 carries the post-translational modification N-acetylmethionine. Residues 1–26 (MTTDEGAKNNGESPTATVAEQGEDIT) are disordered. At Ser-13 the chain carries Phosphoserine. 2 PPIase FKBP-type domains span residues 50–138 (GDKV…LDFK) and 165–251 (GATV…KSFE). TPR repeat units lie at residues 268 to 301 (AAIV…LEME), 317 to 350 (LAAF…DSAN), and 351 to 384 (GKGL…NPQN). Residues 420–457 (DAKEEANKAMGKKTSEGVTNEKGTDSQAMEEEKPEGHV) form a disordered region. At Ser-445 the chain carries Phosphoserine.

In terms of assembly, part of a heteromultimeric cytoplasmic complex with HSP90AA1, HSPA1A/HSPA1B and steroid receptors. Upon ligand binding dissociates from the complex and FKBP4 takes its place. Interacts with functionally mature heterooligomeric progesterone receptor complexes along with HSP90 and TEBP. Interacts with IFI44L; this interaction modulates the kinase activity of IKBKB and IKBKE. Interacts with IKBKB and IKBKE.

The protein resides in the cytoplasm. It localises to the nucleus. It catalyses the reaction [protein]-peptidylproline (omega=180) = [protein]-peptidylproline (omega=0). Its activity is regulated as follows. Inhibited by FK506 but not cyclosporin. In terms of biological role, immunophilin protein with PPIase and co-chaperone activities. Component of unligated steroid receptors heterocomplexes through interaction with heat-shock protein 90 (HSP90). Plays a role in the intracellular trafficking of heterooligomeric forms of steroid hormone receptors maintaining the complex into the cytoplasm when unliganded. Acts as a regulator of Akt/AKT1 activity by promoting the interaction between Akt/AKT1 and PHLPP1, thereby enhancing dephosphorylation and subsequent activation of Akt/AKT1. Interacts with IKBKE and IKBKB which facilitates IKK complex assembly leading to increased IKBKE and IKBKB kinase activity, NF-kappaB activation, and IFN production. This is Peptidyl-prolyl cis-trans isomerase FKBP5 (FKBP5) from Pongo abelii (Sumatran orangutan).